The following is a 144-amino-acid chain: Hexon-interlacing protein (144 aa).

Residues 106-133 are a coiled coil; it reads LTVMLAKLETLTAQLEELSQKVEELADA.

Belongs to the adenoviridae hexon-interlacing protein family. In terms of assembly, homotrimer. Interacts with hexon protein; this interaction tethers the hexons together. Self-interacts with adjacent proteins. Interacts with kinesin light chain KLC1; this interaction leads to capsid disruption at the nuclear pore complex during virus entry into host cell.

It localises to the virion. The protein resides in the host nucleus. Functionally, structural component of the virion that acts as a cement protein on the capsid exterior and forms triskelion structures consisting of three molecules that stabilize three hexon trimers at the center of each icosahedral facet and fixes the peripentonal hexons. Dispensable for assembly. During virus entry, recruits the anterograde motor kinesin-1 to the capsid docked at the nuclear pore complex thereby subjecting the docked capsid to a pulling force. The resulting tension leads to capsid disruption, dispersion of capsid fragments toward cell periphery and eventually viral DNA entry into the host nucleus. The sequence is that of Hexon-interlacing protein from Homo sapiens (Human).